Reading from the N-terminus, the 201-residue chain is Large ribosomal subunit protein uL4 (201 aa).

Positions 43–69 are disordered; that stretch reads TKAQKTRSEVAGGGKKPWRQKGTGRAR.

It belongs to the universal ribosomal protein uL4 family. As to quaternary structure, part of the 50S ribosomal subunit.

Its function is as follows. One of the primary rRNA binding proteins, this protein initially binds near the 5'-end of the 23S rRNA. It is important during the early stages of 50S assembly. It makes multiple contacts with different domains of the 23S rRNA in the assembled 50S subunit and ribosome. Functionally, forms part of the polypeptide exit tunnel. In Idiomarina loihiensis (strain ATCC BAA-735 / DSM 15497 / L2-TR), this protein is Large ribosomal subunit protein uL4.